A 246-amino-acid polypeptide reads, in one-letter code: 2-C-methyl-D-erythritol 4-phosphate cytidylyltransferase (246 aa).

The protein belongs to the IspD/TarI cytidylyltransferase family. IspD subfamily.

It carries out the reaction 2-C-methyl-D-erythritol 4-phosphate + CTP + H(+) = 4-CDP-2-C-methyl-D-erythritol + diphosphate. Its pathway is isoprenoid biosynthesis; isopentenyl diphosphate biosynthesis via DXP pathway; isopentenyl diphosphate from 1-deoxy-D-xylulose 5-phosphate: step 2/6. Its function is as follows. Catalyzes the formation of 4-diphosphocytidyl-2-C-methyl-D-erythritol from CTP and 2-C-methyl-D-erythritol 4-phosphate (MEP). The chain is 2-C-methyl-D-erythritol 4-phosphate cytidylyltransferase from Chlorobaculum parvum (strain DSM 263 / NCIMB 8327) (Chlorobium vibrioforme subsp. thiosulfatophilum).